We begin with the raw amino-acid sequence, 85 residues long: Small ribosomal subunit protein bS20 (85 aa).

The tract at residues 1–24 (MANIKSAIKRAKLSEERRSHNASI) is disordered.

It belongs to the bacterial ribosomal protein bS20 family.

Functionally, binds directly to 16S ribosomal RNA. The chain is Small ribosomal subunit protein bS20 from Bacillus mycoides (strain KBAB4) (Bacillus weihenstephanensis).